Reading from the N-terminus, the 343-residue chain is S-adenosylmethionine:tRNA ribosyltransferase-isomerase (343 aa).

Belongs to the QueA family. As to quaternary structure, monomer.

The protein resides in the cytoplasm. It carries out the reaction 7-aminomethyl-7-carbaguanosine(34) in tRNA + S-adenosyl-L-methionine = epoxyqueuosine(34) in tRNA + adenine + L-methionine + 2 H(+). It participates in tRNA modification; tRNA-queuosine biosynthesis. Its function is as follows. Transfers and isomerizes the ribose moiety from AdoMet to the 7-aminomethyl group of 7-deazaguanine (preQ1-tRNA) to give epoxyqueuosine (oQ-tRNA). The sequence is that of S-adenosylmethionine:tRNA ribosyltransferase-isomerase from Coxiella burnetii (strain CbuG_Q212) (Coxiella burnetii (strain Q212)).